A 124-amino-acid polypeptide reads, in one-letter code: MTSRGVHLLLRLLFLLAVFYSSDSSLMCYHCLLPSPNCSTVTNCTPNHDACLTAVSGPRVYRQCWRYEDCNFEFISNRLEENSLKYNCCRKDLCNGPEDDGTALTGRTVLLVAPLLAAARNLCL.

The first 24 residues, 1–24, serve as a signal peptide directing secretion; that stretch reads MTSRGVHLLLRLLFLLAVFYSSDS. The 77-residue stretch at 25–101 folds into the UPAR/Ly6 domain; that stretch reads SLMCYHCLLP…DLCNGPEDDG (77 aa). 5 disulfides stabilise this stretch: cysteine 28–cysteine 51, cysteine 31–cysteine 38, cysteine 44–cysteine 64, cysteine 70–cysteine 88, and cysteine 89–cysteine 94. An N-linked (GlcNAc...) asparagine glycan is attached at asparagine 37. Glycine 101 is lipidated: GPI-anchor amidated glycine. The propeptide at 102–124 is removed in mature form; the sequence is TALTGRTVLLVAPLLAAARNLCL.

In terms of assembly, interacts with T-cell surface antigen CD2. N- and O-glycosylated.

The protein resides in the cell membrane. The protein localises to the secreted. Functionally, potent inhibitor of the complement membrane attack complex (MAC) action, which protects self-cells from damage during complement activation. Acts by binding to the beta-haipins of C8 (C8A and C8B) components of the assembling MAC, forming an intermolecular beta-sheet that prevents incorporation of the multiple copies of C9 required for complete formation of the osmolytic pore. This is CD59 glycoprotein from Oryctolagus cuniculus (Rabbit).